Reading from the N-terminus, the 404-residue chain is Endophilin-B2 (404 aa).

M1 is subject to N-acetylmethionine. Residues 1 to 27 (MDFNMKKLASDAGIFFTRAVQFTEEKF) are membrane-binding amphipathic helix. S10 is subject to Phosphoserine. One can recognise a BAR domain in the interval 24–291 (EEKFGQAEKT…LGSSQGAIFP (268 aa)). A coiled-coil region spans residues 209 to 239 (SASALWNDEVDKAEQELRAAQTEFDRQAEVT). The 61-residue stretch at 344–404 (SGTRKARVLY…VPVTYLELLS (61 aa)) folds into the SH3 domain. S404 carries the phosphoserine modification.

Belongs to the endophilin family. In terms of assembly, homodimer, and heterodimer with SH3GLB1.

It localises to the cytoplasm. The chain is Endophilin-B2 from Rattus norvegicus (Rat).